Consider the following 987-residue polypeptide: Mediator of RNA polymerase II transcription subunit 24 (987 aa).

6 short sequence motifs (LXXLL motif) span residues 128–132, 344–348, 446–450, 555–559, 786–790, and 855–859; these read LHWLL, LTPLL, LDLLL, LVALL, LPGLL, and LMRLL. 2 positions are modified to phosphoserine: serine 860 and serine 871.

The protein belongs to the Mediator complex subunit 24 family. In terms of assembly, component of the Mediator complex, which is composed of MED1, MED4, MED6, MED7, MED8, MED9, MED10, MED11, MED12, MED13, MED13L, MED14, MED15, MED16, MED17, MED18, MED19, MED20, MED21, MED22, MED23, MED24, MED25, MED26, MED27, MED29, MED30, MED31, CCNC, CDK8 and CDC2L6/CDK11. The MED12, MED13, CCNC and CDK8 subunits form a distinct module termed the CDK8 module. Mediator containing the CDK8 module is less active than Mediator lacking this module in supporting transcriptional activation. Individual preparations of the Mediator complex lacking one or more distinct subunits have been variously termed ARC, CRSP, DRIP, PC2, SMCC and TRAP. Interacts with AR.

It is found in the nucleus. Functionally, component of the Mediator complex, a coactivator involved in the regulated transcription of nearly all RNA polymerase II-dependent genes. Mediator functions as a bridge to convey information from gene-specific regulatory proteins to the basal RNA polymerase II transcription machinery. Mediator is recruited to promoters by direct interactions with regulatory proteins and serves as a scaffold for the assembly of a functional preinitiation complex with RNA polymerase II and the general transcription factors. The polypeptide is Mediator of RNA polymerase II transcription subunit 24 (Med24) (Rattus norvegicus (Rat)).